Reading from the N-terminus, the 283-residue chain is Thymidylate synthase (283 aa).

Arginine 22 is a dUMP binding site. Cysteine 160 serves as the catalytic Nucleophile. DUMP contacts are provided by residues 180 to 183 (RSCD), asparagine 191, and 221 to 223 (HIY). Aspartate 183 serves as a coordination point for (6R)-5,10-methylene-5,6,7,8-tetrahydrofolate. Serine 282 provides a ligand contact to (6R)-5,10-methylene-5,6,7,8-tetrahydrofolate.

Belongs to the thymidylate synthase family. Bacterial-type ThyA subfamily. As to quaternary structure, homodimer.

The protein resides in the cytoplasm. It catalyses the reaction dUMP + (6R)-5,10-methylene-5,6,7,8-tetrahydrofolate = 7,8-dihydrofolate + dTMP. The protein operates within pyrimidine metabolism; dTTP biosynthesis. Functionally, catalyzes the reductive methylation of 2'-deoxyuridine-5'-monophosphate (dUMP) to 2'-deoxythymidine-5'-monophosphate (dTMP) while utilizing 5,10-methylenetetrahydrofolate (mTHF) as the methyl donor and reductant in the reaction, yielding dihydrofolate (DHF) as a by-product. This enzymatic reaction provides an intracellular de novo source of dTMP, an essential precursor for DNA biosynthesis. This Vibrio vulnificus (strain CMCP6) protein is Thymidylate synthase.